We begin with the raw amino-acid sequence, 423 residues long: LysM domain-containing GPI-anchored protein 3 (423 aa).

The N-terminal stretch at 1–24 (MKNPEKPLLLFLILASSLASMATA) is a signal peptide. Cystine bridges form between Cys31/Cys97, Cys37/Cys160, Cys95/Cys158, and Cys97/Cys160. The LysM 1 domain maps to 107-154 (THYKTRTSDTLGSIADSVYGGLVSPEQIQVANSETDLSVLDVGTKLVI). Asn162 is a glycosylation site (N-linked (GlcNAc...) asparagine). Positions 173-216 (LSYVVRGIDTMAGIAKRFSTSVTDLTNVNAMGAPDINPGDILAV) constitute a LysM 2 domain. 2 disulfide bridges follow: Cys221-Cys253 and Cys248-Cys276. N-linked (GlcNAc...) asparagine glycosylation occurs at Asn238. Residue Asn285 is glycosylated (N-linked (GlcNAc...) asparagine). Residue Gly394 is the site of GPI-anchor amidated glycine attachment. The propeptide at 395 to 423 (GSISIASCPLSYYSFIALLIPIGSCFFVF) is removed in mature form.

In terms of assembly, interacts with peptidoglycans.

The protein resides in the cell membrane. In terms of biological role, required as a cell surface receptor for peptidoglycan (PGN) elicitor signaling leading to innate immunity. Plays an essential role in detecting PGNs and restricting bacterial growth (of Pseudomonas syringae pv. tomato DC3000 for example). In Arabidopsis thaliana (Mouse-ear cress), this protein is LysM domain-containing GPI-anchored protein 3 (LYM3).